We begin with the raw amino-acid sequence, 281 residues long: Energy-coupling factor transporter ATP-binding protein EcfA1 (281 aa).

One can recognise an ABC transporter domain in the interval 6–245 (IKSEDLVFKY…VEKIKSIGLD (240 aa)). Residue 44-51 (GHNGSGKS) participates in ATP binding.

Belongs to the ABC transporter superfamily. Energy-coupling factor EcfA family. Forms a stable energy-coupling factor (ECF) transporter complex composed of 2 membrane-embedded substrate-binding proteins (S component), 2 ATP-binding proteins (A component) and 2 transmembrane proteins (T component).

Its subcellular location is the cell membrane. Functionally, ATP-binding (A) component of a common energy-coupling factor (ECF) ABC-transporter complex. Unlike classic ABC transporters this ECF transporter provides the energy necessary to transport a number of different substrates. The polypeptide is Energy-coupling factor transporter ATP-binding protein EcfA1 (Clostridium perfringens (strain ATCC 13124 / DSM 756 / JCM 1290 / NCIMB 6125 / NCTC 8237 / Type A)).